The sequence spans 514 residues: Probable outer membrane protein pmp12 (514 aa).

The first 21 residues, 1–21 (MTILRNFLTCSALFLALPAAA), serve as a signal peptide directing secretion.

Belongs to the PMP outer membrane protein family.

The protein localises to the secreted. It is found in the cell wall. Its subcellular location is the cell outer membrane. The sequence is that of Probable outer membrane protein pmp12 (pmp12) from Chlamydia pneumoniae (Chlamydophila pneumoniae).